The primary structure comprises 365 residues: Terpene cyclase DEP1 (365 aa).

8 helical membrane passes run 10–30 (LYLS…NGMF), 82–102 (LLFF…LIES), 116–136 (AWAM…IYLY), 158–178 (LPII…PAWF), 188–208 (ALIA…VGIT), 233–253 (LILA…GALF), 297–317 (LFSQ…AQLL), and 338–358 (MIYL…SFAL).

Belongs to the membrane-bound ascI terpene cyclase family.

Its subcellular location is the membrane. It participates in polyketide biosynthesis. Functionally, part of the gene cluster that mediates the biosynthesis of depudecin, a highly oxidized eleven-carbon linear polyketide that acts as a histone deacetylase (HDAC) inhibitor and makes a small contribution to pathogenesis. The reducing polyketide synthase DEP5 is the central enzyme in depudecin biosynthesis by yielding the backbone polyketide chain. The monooxygenases DEP2 and DEP4, as well as the uncharacterized protein DEP1, then act as tailoring enzymes to modify the intermediate polyketide chain into depudecin. The sequence is that of Terpene cyclase DEP1 from Fusarium langsethiae.